Reading from the N-terminus, the 158-residue chain is Glycine/sarcosine/betaine reductase complex component A (158 aa).

Selenocysteine 44 is a catalytic residue. Position 44 (selenocysteine 44) is a non-standard amino acid, selenocysteine.

It belongs to the GrdA family. In terms of assembly, monomer. Component of the glycine, sarcosine and betaine reductase complexes, together with components B and C.

The enzyme catalyses acetyl phosphate + [thioredoxin]-disulfide + NH4(+) + H2O = [thioredoxin]-dithiol + glycine + phosphate + H(+). The catalysed reaction is acetyl phosphate + methylamine + [thioredoxin]-disulfide + H2O = sarcosine + [thioredoxin]-dithiol + phosphate + H(+). It carries out the reaction acetyl phosphate + trimethylamine + [thioredoxin]-disulfide + H2O = glycine betaine + [thioredoxin]-dithiol + phosphate + H(+). In the first step of glycine, betaine and sarcosine reductases, the substrate is bound to component PB via a Schiff base intermediate. Then the PB-activated substrate is nucleophilically attacked by the selenol anion of component PA to transform it to a carboxymethylated selenoether and the respective amine. By action of component PC, acetyl phosphate is formed, leaving component PA in its oxidized state. Finally component PA becomes reduced by the thioredoxin system to start a new catalytic cycle of reductive deamination. This chain is Glycine/sarcosine/betaine reductase complex component A (grdA), found in Acetoanaerobium sticklandii (strain ATCC 12662 / DSM 519 / JCM 1433 / CCUG 9281 / NCIMB 10654 / HF) (Clostridium sticklandii).